We begin with the raw amino-acid sequence, 179 residues long: ADP-ribosylation factor-like protein 5A (179 aa).

Gly-2 carries the N-myristoyl glycine lipid modification. GTP-binding positions include 23–30 (GLDNAGKT), 66–70 (DIGGQ), 125–128 (NKQD), and Ala-159.

This sequence belongs to the small GTPase superfamily. Arf family. As to expression, low amounts were found in most tissues examined with highest levels in brain, intestine and thymus.

Functionally, lacks ADP-ribosylation enhancing activity. The chain is ADP-ribosylation factor-like protein 5A (Arl5a) from Rattus norvegicus (Rat).